Reading from the N-terminus, the 147-residue chain is Probable 4-amino-4-deoxy-L-arabinose-phosphoundecaprenol flippase subunit ArnF (147 aa).

At 1–23 the chain is on the cytoplasmic side; it reads MSNDHPQGQLPASPARSALKGYL. A helical membrane pass occupies residues 24–44; that stretch reads YVLGSILLVTAAQLGMKWGVI. Residues 45-62 lie on the Periplasmic side of the membrane; it reads QLPTWQMDLAVMLAHPLP. Residues 63–83 traverse the membrane as a helical segment; that stretch reads LLVILAGVGCYALSLLCWLAA. Residues 84–93 lie on the Cytoplasmic side of the membrane; it reads LHSTPLNIAY. Residues 94–114 traverse the membrane as a helical segment; it reads PLLSTSYALVYLLAVNIPLFA. At 115 to 121 the chain is on the periplasmic side; sequence EPLEPGK. The chain crosses the membrane as a helical span at residues 122–142; sequence ALGVLFILLGAVLVGIKPAAG. Over 143 to 147 the chain is Cytoplasmic; that stretch reads TKQTG.

This sequence belongs to the ArnF family. In terms of assembly, heterodimer of ArnE and ArnF.

The protein resides in the cell inner membrane. It participates in bacterial outer membrane biogenesis; lipopolysaccharide biosynthesis. Functionally, translocates 4-amino-4-deoxy-L-arabinose-phosphoundecaprenol (alpha-L-Ara4N-phosphoundecaprenol) from the cytoplasmic to the periplasmic side of the inner membrane. The chain is Probable 4-amino-4-deoxy-L-arabinose-phosphoundecaprenol flippase subunit ArnF from Aeromonas hydrophila subsp. hydrophila (strain ATCC 7966 / DSM 30187 / BCRC 13018 / CCUG 14551 / JCM 1027 / KCTC 2358 / NCIMB 9240 / NCTC 8049).